We begin with the raw amino-acid sequence, 633 residues long: Biosynthetic arginine decarboxylase (633 aa).

Lys-101 is modified (N6-(pyridoxal phosphate)lysine). 284-294 (VDVGGGLGVDY) contributes to the substrate binding site.

The protein belongs to the Orn/Lys/Arg decarboxylase class-II family. SpeA subfamily. The cofactor is Mg(2+). Pyridoxal 5'-phosphate serves as cofactor.

The enzyme catalyses L-arginine + H(+) = agmatine + CO2. The protein operates within amine and polyamine biosynthesis; agmatine biosynthesis; agmatine from L-arginine: step 1/1. Its function is as follows. Catalyzes the biosynthesis of agmatine from arginine. This is Biosynthetic arginine decarboxylase from Aeromonas hydrophila subsp. hydrophila (strain ATCC 7966 / DSM 30187 / BCRC 13018 / CCUG 14551 / JCM 1027 / KCTC 2358 / NCIMB 9240 / NCTC 8049).